Here is a 407-residue protein sequence, read N- to C-terminus: Argininosuccinate synthase (407 aa).

ATP-binding positions include 16–24 (AYSGGLDTS) and alanine 44. The L-citrulline site is built by tyrosine 96 and serine 101. An ATP-binding site is contributed by glycine 126. 3 residues coordinate L-aspartate: threonine 128, asparagine 132, and aspartate 133. Position 132 (asparagine 132) interacts with L-citrulline. Residues arginine 136, serine 185, serine 194, glutamate 270, and tyrosine 282 each coordinate L-citrulline.

It belongs to the argininosuccinate synthase family. Type 1 subfamily. In terms of assembly, homotetramer.

The protein localises to the cytoplasm. The catalysed reaction is L-citrulline + L-aspartate + ATP = 2-(N(omega)-L-arginino)succinate + AMP + diphosphate + H(+). It functions in the pathway amino-acid biosynthesis; L-arginine biosynthesis; L-arginine from L-ornithine and carbamoyl phosphate: step 2/3. The chain is Argininosuccinate synthase from Shewanella sediminis (strain HAW-EB3).